We begin with the raw amino-acid sequence, 343 residues long: Thymidine kinase (343 aa).

27–34 provides a ligand contact to ATP; the sequence is GAYGIGKS. Glu56 functions as the Proton acceptor in the catalytic mechanism. 2 residues coordinate substrate: Tyr74 and Gln98. Residue Arg188 participates in ATP binding. Arg194 is a substrate binding site.

It belongs to the herpesviridae thymidine kinase family. In terms of assembly, homodimer.

It carries out the reaction thymidine + ATP = dTMP + ADP + H(+). In terms of biological role, catalyzes the transfer of the gamma-phospho group of ATP to thymidine to generate dTMP in the salvage pathway of pyrimidine synthesis. The dTMP serves as a substrate for DNA polymerase during viral DNA replication. Allows the virus to be reactivated and to grow in non-proliferative cells lacking a high concentration of phosphorylated nucleic acid precursors. The polypeptide is Thymidine kinase (Felidae (cat family)).